The chain runs to 424 residues: MYALYFILVVVLCCIMMSTTVAHKMKEHIPFFEDMCKGIKAGDTCEKLVGYSAVYRVCFGMACFFFIFCLLTLKINNSKSCRAHIHNGFWFFKLLLLGAMCSGAFFIPDQDTFLNAWRYVGAVGGFLFIGIQLLLLVEFAHKWNKNWTAGTASNKLWYASLALVTLIMYSIATGGLVLMAVFYTQKDGCMENKILLGVNGGLCVLISLVAISPCVQNRQPHSGLLQSGVISCYVTYLTFSALSSKPAEVVLDEHGKNVTICVPDFGQDLYRDENLVTILGTSLLIGCILYSCLTSTTRSSSDALQGRYAAPELEIARCCFCFSPGGEDTEEQQQGKEGPRVIYDEKKGTVYIYSYFHFVFFLASLYVMMTVTNWFNYESANIESFFSGSWSIFWVKMASCWICVLLYLCTLVAPLCCPTREFSV.

Over 1 to 6 (MYALYF) the chain is Extracellular. Residues 7–23 (ILVVVLCCIMMSTTVAH) traverse the membrane as a helical segment. Residues 24 to 52 (KMKEHIPFFEDMCKGIKAGDTCEKLVGYS) are Cytoplasmic-facing. Residues 53–73 (AVYRVCFGMACFFFIFCLLTL) form a helical membrane-spanning segment. Topologically, residues 74-87 (KINNSKSCRAHIHN) are extracellular. The N-linked (GlcNAc...) asparagine glycan is linked to N76. Residues 88 to 108 (GFWFFKLLLLGAMCSGAFFIP) traverse the membrane as a helical segment. At 109 to 119 (DQDTFLNAWRY) the chain is on the cytoplasmic side. A helical membrane pass occupies residues 120–140 (VGAVGGFLFIGIQLLLLVEFA). The Extracellular portion of the chain corresponds to 141–161 (HKWNKNWTAGTASNKLWYASL). N146 carries an N-linked (GlcNAc...) asparagine glycan. A helical membrane pass occupies residues 162-182 (ALVTLIMYSIATGGLVLMAVF). Over 183–193 (YTQKDGCMENK) the chain is Cytoplasmic. Residues 194–214 (ILLGVNGGLCVLISLVAISPC) form a helical membrane-spanning segment. Over 215–221 (VQNRQPH) the chain is Extracellular. The helical transmembrane segment at 222 to 242 (SGLLQSGVISCYVTYLTFSAL) threads the bilayer. Residues 243 to 274 (SSKPAEVVLDEHGKNVTICVPDFGQDLYRDEN) are Cytoplasmic-facing. A helical membrane pass occupies residues 275 to 295 (LVTILGTSLLIGCILYSCLTS). Residues 296 to 348 (TTRSSSDALQGRYAAPELEIARCCFCFSPGGEDTEEQQQGKEGPRVIYDEKKG) are Extracellular-facing. A helical transmembrane segment spans residues 349-369 (TVYIYSYFHFVFFLASLYVMM). Residues 370 to 391 (TVTNWFNYESANIESFFSGSWS) lie on the Cytoplasmic side of the membrane. Residues 392–412 (IFWVKMASCWICVLLYLCTLV) form a helical membrane-spanning segment. The Extracellular portion of the chain corresponds to 413 to 424 (APLCCPTREFSV).

It belongs to the TDE1 family.

It localises to the cell membrane. The catalysed reaction is a 1,2-diacyl-sn-glycero-3-phospho-L-serine(in) = a 1,2-diacyl-sn-glycero-3-phospho-L-serine(out). It catalyses the reaction a 1,2-diacyl-sn-glycero-3-phosphocholine(in) = a 1,2-diacyl-sn-glycero-3-phosphocholine(out). The enzyme catalyses a 1,2-diacyl-sn-glycero-3-phosphoethanolamine(in) = a 1,2-diacyl-sn-glycero-3-phosphoethanolamine(out). Functionally, restriction factor required to restrict infectivity of gammaretroviruses: acts by inhibiting an early step of viral infection. Impairs the penetration of the viral particle into the cytoplasm. Non-ATP-dependent, non-specific lipid transporter for phosphatidylserine, phosphatidylcholine, and phosphatidylethanolamine. Functions as a scramblase that flips lipids in both directions across the membrane. Phospholipid scrambling results in gammaretroviral surface exposure of phosphatidylserine and loss of membrane asymmetry, which leads to loss of infectivity. Enhances the incorporation of serine into phosphatidylserine and sphingolipids. May play a role in providing serine molecules for the formation of myelin glycosphingolipids in oligodendrocytes. The polypeptide is Serine incorporator 5 (SERINC5) (Macaca fascicularis (Crab-eating macaque)).